We begin with the raw amino-acid sequence, 239 residues long: Protein GrpE (239 aa).

Disordered stretches follow at residues 1–56 and 208–239; these read MIEN…KNTI and SMGP…SEDV. Residues 40 to 53 are compositionally biased toward basic and acidic residues; that stretch reads TSQKKEAINTEELK. Residues 224 to 239 show a composition bias toward acidic residues; the sequence is TVEEDVNSEVNTSEDV.

Belongs to the GrpE family. In terms of assembly, homodimer.

Its subcellular location is the cytoplasm. Its function is as follows. Participates actively in the response to hyperosmotic and heat shock by preventing the aggregation of stress-denatured proteins, in association with DnaK and GrpE. It is the nucleotide exchange factor for DnaK and may function as a thermosensor. Unfolded proteins bind initially to DnaJ; upon interaction with the DnaJ-bound protein, DnaK hydrolyzes its bound ATP, resulting in the formation of a stable complex. GrpE releases ADP from DnaK; ATP binding to DnaK triggers the release of the substrate protein, thus completing the reaction cycle. Several rounds of ATP-dependent interactions between DnaJ, DnaK and GrpE are required for fully efficient folding. The chain is Protein GrpE from Prochlorococcus marinus (strain MIT 9215).